The primary structure comprises 390 residues: Terminal nucleotidyltransferase 5C (390 aa).

Belongs to the TENT family.

The protein resides in the nucleus. It is found in the cytoplasm. Its subcellular location is the cytoskeleton. It localises to the microtubule organizing center. The protein localises to the centrosome. It catalyses the reaction RNA(n) + ATP = RNA(n)-3'-adenine ribonucleotide + diphosphate. Its function is as follows. Catalyzes the transfer of one adenosine molecule from an ATP to an mRNA poly(A) tail bearing a 3'-OH terminal group and enhances mRNA stability and gene expression. The protein is Terminal nucleotidyltransferase 5C of Gallus gallus (Chicken).